The chain runs to 181 residues: Adenylyl-sulfate kinase (181 aa).

12-19 (GLSGAGKT) is an ATP binding site. Ser86 (phosphoserine intermediate) is an active-site residue.

This sequence belongs to the APS kinase family.

It carries out the reaction adenosine 5'-phosphosulfate + ATP = 3'-phosphoadenylyl sulfate + ADP + H(+). The protein operates within sulfur metabolism; hydrogen sulfide biosynthesis; sulfite from sulfate: step 2/3. In terms of biological role, catalyzes the synthesis of activated sulfate. The chain is Adenylyl-sulfate kinase from Rippkaea orientalis (strain PCC 8801 / RF-1) (Cyanothece sp. (strain PCC 8801)).